Here is a 314-residue protein sequence, read N- to C-terminus: tRNA dimethylallyltransferase (314 aa).

An ATP-binding site is contributed by 13–20; sequence GPTAVGKT. 15 to 20 is a binding site for substrate; it reads TAVGKT. Residues 38–41 form an interaction with substrate tRNA region; sequence DSMQ.

It belongs to the IPP transferase family. In terms of assembly, monomer. It depends on Mg(2+) as a cofactor.

It carries out the reaction adenosine(37) in tRNA + dimethylallyl diphosphate = N(6)-dimethylallyladenosine(37) in tRNA + diphosphate. Catalyzes the transfer of a dimethylallyl group onto the adenine at position 37 in tRNAs that read codons beginning with uridine, leading to the formation of N6-(dimethylallyl)adenosine (i(6)A). The chain is tRNA dimethylallyltransferase from Bacillus licheniformis (strain ATCC 14580 / DSM 13 / JCM 2505 / CCUG 7422 / NBRC 12200 / NCIMB 9375 / NCTC 10341 / NRRL NRS-1264 / Gibson 46).